A 464-amino-acid polypeptide reads, in one-letter code: MAARIGIFSVFVAVLLSISAFSSAQDLQIVNAERRIDLSSHIVKAFLTLKVENIGKDPAAEMLLAFPPTQIKNLAMVQALATTGKKKKKTYLPLDVKPTEQPDAPNDTGYYRVTFISPLGPGETVSLEVLYILTHSLEPFPVEITQSESQLVYYHDSAVILSPYHVKQQTTFIKTPSTRVESFTSIEPANRAGKEIKYGPYENRASYSYTPVIIHFENNSPFAVVEELVREIEISHWGSLQITENYRLTHGGARHKGVFSRVDYQSKRSVSGASSFNALLAVLPPRVNSVYYRDEIGNISTSHLRTGFRKSELEFEPRYPLFGGWSATFIIGYRVPLEDYLFEASDGRRYLNFTFGCPLVETIVNKLTIKVVLPEGSKDPSAVLPFTVNQELQVKYSYLDIVGRTVVVLQKDNVVPTHNVPFQVYYTFKPIYMLAEPFMLVSAFFLVFVASLAYVHIDLNIVRK.

Positions 1–24 (MAARIGIFSVFVAVLLSISAFSSA) are cleaved as a signal peptide. At 25–436 (QDLQIVNAER…TFKPIYMLAE (412 aa)) the chain is on the lumenal side. Asparagine 106 and asparagine 298 each carry an N-linked (GlcNAc...) asparagine glycan. Lysine 310 participates in a covalent cross-link: Glycyl lysine isopeptide (Lys-Gly) (interchain with G-Cter in ubiquitin). Asparagine 352 carries an N-linked (GlcNAc...) asparagine glycan. A helical transmembrane segment spans residues 437–457 (PFMLVSAFFLVFVASLAYVHI). Topologically, residues 458 to 464 (DLNIVRK) are cytoplasmic.

The protein belongs to the OST1 family. In terms of assembly, component of the oligosaccharyltransferase (OST) complex.

Its subcellular location is the endoplasmic reticulum membrane. It participates in protein modification; protein glycosylation. In terms of biological role, subunit of the oligosaccharyl transferase (OST) complex that catalyzes the initial transfer of a defined glycan (Glc(3)Man(9)GlcNAc(2) in eukaryotes) from the lipid carrier dolichol-pyrophosphate to an asparagine residue within an Asn-X-Ser/Thr consensus motif in nascent polypeptide chains, the first step in protein N-glycosylation. N-glycosylation occurs cotranslationally and the complex associates with the Sec61 complex at the channel-forming translocon complex that mediates protein translocation across the endoplasmic reticulum (ER). All subunits are required for a maximal enzyme activity. The chain is Dolichyl-diphosphooligosaccharide--protein glycosyltransferase subunit 1B (OST1B) from Arabidopsis thaliana (Mouse-ear cress).